The chain runs to 483 residues: Siroheme synthase (483 aa).

A precorrin-2 dehydrogenase /sirohydrochlorin ferrochelatase region spans residues 1 to 203; it reads MNYFPIFANL…RQNTLAEREL (203 aa). Residues 22–23 and 43–44 each bind NAD(+); these read AV and KH. Ser128 is modified (phosphoserine). The tract at residues 214-483 is uroporphyrinogen-III C-methyltransferase; sequence GFVSLVGAGP…LGTGQEQQAA (270 aa). Residue Pro223 participates in S-adenosyl-L-methionine binding. The Proton acceptor role is filled by Asp246. The active-site Proton donor is the Lys268. S-adenosyl-L-methionine contacts are provided by residues 299 to 301, Val304, 329 to 330, Met381, and Gly410; these read GGD and TA.

The protein in the N-terminal section; belongs to the precorrin-2 dehydrogenase / sirohydrochlorin ferrochelatase family. It in the C-terminal section; belongs to the precorrin methyltransferase family.

It catalyses the reaction uroporphyrinogen III + 2 S-adenosyl-L-methionine = precorrin-2 + 2 S-adenosyl-L-homocysteine + H(+). The enzyme catalyses precorrin-2 + NAD(+) = sirohydrochlorin + NADH + 2 H(+). It carries out the reaction siroheme + 2 H(+) = sirohydrochlorin + Fe(2+). It participates in cofactor biosynthesis; adenosylcobalamin biosynthesis; precorrin-2 from uroporphyrinogen III: step 1/1. The protein operates within cofactor biosynthesis; adenosylcobalamin biosynthesis; sirohydrochlorin from precorrin-2: step 1/1. It functions in the pathway porphyrin-containing compound metabolism; siroheme biosynthesis; precorrin-2 from uroporphyrinogen III: step 1/1. Its pathway is porphyrin-containing compound metabolism; siroheme biosynthesis; siroheme from sirohydrochlorin: step 1/1. It participates in porphyrin-containing compound metabolism; siroheme biosynthesis; sirohydrochlorin from precorrin-2: step 1/1. Its function is as follows. Multifunctional enzyme that catalyzes the SAM-dependent methylations of uroporphyrinogen III at position C-2 and C-7 to form precorrin-2 via precorrin-1. Then it catalyzes the NAD-dependent ring dehydrogenation of precorrin-2 to yield sirohydrochlorin. Finally, it catalyzes the ferrochelation of sirohydrochlorin to yield siroheme. In Neisseria meningitidis serogroup C / serotype 2a (strain ATCC 700532 / DSM 15464 / FAM18), this protein is Siroheme synthase.